The chain runs to 464 residues: tRNA modification GTPase MnmE (464 aa).

3 residues coordinate (6S)-5-formyl-5,6,7,8-tetrahydrofolate: R28, E90, and R129. Residues 226–385 form the TrmE-type G domain; sequence GLATAIVGRP…LEEKIAELFF (160 aa). N236 contacts K(+). Residues 236-241, 255-261, and 280-283 each bind GTP; these read NVGKSS, TDIAGTT, and DTAG. Residue S240 participates in Mg(2+) binding. The K(+) site is built by T255, I257, and T260. Position 261 (T261) interacts with Mg(2+). K464 lines the (6S)-5-formyl-5,6,7,8-tetrahydrofolate pocket.

It belongs to the TRAFAC class TrmE-Era-EngA-EngB-Septin-like GTPase superfamily. TrmE GTPase family. Homodimer. Heterotetramer of two MnmE and two MnmG subunits. The cofactor is K(+).

It localises to the cytoplasm. In terms of biological role, exhibits a very high intrinsic GTPase hydrolysis rate. Involved in the addition of a carboxymethylaminomethyl (cmnm) group at the wobble position (U34) of certain tRNAs, forming tRNA-cmnm(5)s(2)U34. The protein is tRNA modification GTPase MnmE of Ligilactobacillus salivarius (strain UCC118) (Lactobacillus salivarius).